A 1183-amino-acid chain; its full sequence is DNA-directed RNA polymerase subunit beta (1183 aa).

This sequence belongs to the RNA polymerase beta chain family. As to quaternary structure, the RNAP catalytic core consists of 2 alpha, 1 beta, 1 beta' and 1 omega subunit. When a sigma factor is associated with the core the holoenzyme is formed, which can initiate transcription.

It carries out the reaction RNA(n) + a ribonucleoside 5'-triphosphate = RNA(n+1) + diphosphate. DNA-dependent RNA polymerase catalyzes the transcription of DNA into RNA using the four ribonucleoside triphosphates as substrates. This is DNA-directed RNA polymerase subunit beta from Staphylococcus aureus (strain COL).